Here is a 328-residue protein sequence, read N- to C-terminus: tRNA U34 carboxymethyltransferase (328 aa).

Residues K91, W105, K110, G130, 152 to 154 (DPS), M196, Y200, and R315 contribute to the carboxy-S-adenosyl-L-methionine site.

It belongs to the class I-like SAM-binding methyltransferase superfamily. CmoB family. Homotetramer.

The catalysed reaction is carboxy-S-adenosyl-L-methionine + 5-hydroxyuridine(34) in tRNA = 5-carboxymethoxyuridine(34) in tRNA + S-adenosyl-L-homocysteine + H(+). Catalyzes carboxymethyl transfer from carboxy-S-adenosyl-L-methionine (Cx-SAM) to 5-hydroxyuridine (ho5U) to form 5-carboxymethoxyuridine (cmo5U) at position 34 in tRNAs. This Psychromonas ingrahamii (strain DSM 17664 / CCUG 51855 / 37) protein is tRNA U34 carboxymethyltransferase.